Reading from the N-terminus, the 343-residue chain is S-adenosylmethionine:tRNA ribosyltransferase-isomerase (343 aa).

It belongs to the QueA family. Monomer.

It localises to the cytoplasm. It catalyses the reaction 7-aminomethyl-7-carbaguanosine(34) in tRNA + S-adenosyl-L-methionine = epoxyqueuosine(34) in tRNA + adenine + L-methionine + 2 H(+). Its pathway is tRNA modification; tRNA-queuosine biosynthesis. Transfers and isomerizes the ribose moiety from AdoMet to the 7-aminomethyl group of 7-deazaguanine (preQ1-tRNA) to give epoxyqueuosine (oQ-tRNA). This is S-adenosylmethionine:tRNA ribosyltransferase-isomerase from Pelobacter propionicus (strain DSM 2379 / NBRC 103807 / OttBd1).